Consider the following 1451-residue polypeptide: ABC transporter G family member 32 (1451 aa).

The ABC transporter 1 domain maps to 162–435; sequence GNALHISPTR…FELMGFRCPQ (274 aa). 195-202 contacts ATP; it reads GPPGSGKT. Residues 513 to 725 enclose the ABC transmembrane type-2 1 domain; that stretch reads ALLKANIDRE…AQNAISTNEF (213 aa). 6 helical membrane-spanning segments follow: residues 531–551, 563–583, 618–638, 650–670, 674–694, and 760–780; these read FVYI…MTTF, GTIY…NGFA, IPVT…VVGF, LLLV…AGIG, VVSQ…GGFI, and IGFG…TVAL. Residues 809 to 835 form a disordered region; the sequence is ILDSCEEKKSRKKEQSQSVNQKHWNNT. Residues 813–823 show a composition bias toward basic and acidic residues; sequence CEEKKSRKKEQ. The ABC transporter 2 domain occupies 853 to 1105; sequence LSFNDIKYSV…KLIEYFEGIE (253 aa). 898-905 contacts ATP; the sequence is GVSGAGKT. The ABC transmembrane type-2 2 domain occupies 1178–1392; it reads TQCIACLWKH…TLYGLVASQF (215 aa). The next 7 helical transmembrane spans lie at 1197-1217, 1237-1257, 1285-1305, 1312-1332, 1342-1362, 1373-1393, and 1423-1443; these read YTAV…TMFW, YAAV…VVVV, LPYI…MIGF, FIWY…FGMM, IAAI…GYLI, WYCW…SQFG, and LVAV…SFAI.

This sequence belongs to the ABC transporter superfamily. ABCG family. PDR (TC 3.A.1.205) subfamily.

It is found in the membrane. May be a general defense protein. This chain is ABC transporter G family member 32, found in Oryza sativa subsp. japonica (Rice).